The chain runs to 349 residues: Probable G-protein coupled receptor 21 (349 aa).

At 1-32 the chain is on the extracellular side; that stretch reads MNSTWDGNQSSHPFCLLALGYLETVRFCLLEV. Residues Asn-2 and Asn-8 are each glycosylated (N-linked (GlcNAc...) asparagine). A helical membrane pass occupies residues 33–53; it reads LIIVFLTVLIISGNIIVIFVF. Residues 54–75 are Cytoplasmic-facing; it reads HCAPLLNHHSTSYFIQTMAYAD. The helical transmembrane segment at 76–96 threads the bilayer; sequence LLVGVSCLVPSLSLLYYPLPI. Residues 97–104 lie on the Extracellular side of the membrane; that stretch reads EEAMTCQV. A helical membrane pass occupies residues 105–125; sequence FGFVVSVLKSISMASLACISI. At 126-147 the chain is on the cytoplasmic side; that stretch reads DRYIAITKPLTYNTLVTPWRLR. Residues 148–168 traverse the membrane as a helical segment; it reads LCIFLIWLYSTLVFLPSFFHW. Over 169–191 the chain is Extracellular; the sequence is GKPGYHGDVFQWCAESWHTNSYF. A helical transmembrane segment spans residues 192 to 212; it reads TLFIVMMLYAPAALIVCFTYF. Residues 213–252 are Cytoplasmic-facing; sequence NIFRICQQHTKEISERQARFSSQNGETGEPQTCPDKRYAM. Residues 253–273 traverse the membrane as a helical segment; the sequence is VLFRITSVFYVLWLPYIIYFL. Over 274–283 the chain is Extracellular; that stretch reads LESSTGCSSR. Residues 284-304 form a helical membrane-spanning segment; it reads LASFLTTWLAISNSFCNCIIY. Topologically, residues 305–349 are cytoplasmic; that stretch reads SLSNSVFQRGLKGLSGSLCTSCASHTTAKDPYTVRCKGPPNGSHI.

Belongs to the G-protein coupled receptor 1 family.

The protein resides in the cell membrane. Its function is as follows. Orphan receptor. The sequence is that of Probable G-protein coupled receptor 21 (Gpr21) from Mus musculus (Mouse).